The following is a 396-amino-acid chain: Acetate kinase (396 aa).

Asparagine 8 is a binding site for Mg(2+). Lysine 15 contacts ATP. Arginine 89 serves as a coordination point for substrate. Aspartate 146 functions as the Proton donor/acceptor in the catalytic mechanism. Residues 206–210 (HLGNG), 280–282 (DMR), and 328–332 (GVGEN) each bind ATP. Mg(2+) is bound at residue glutamate 382.

Belongs to the acetokinase family. In terms of assembly, homodimer. The cofactor is Mg(2+). Mn(2+) is required as a cofactor.

The protein resides in the cytoplasm. The enzyme catalyses acetate + ATP = acetyl phosphate + ADP. It participates in metabolic intermediate biosynthesis; acetyl-CoA biosynthesis; acetyl-CoA from acetate: step 1/2. Functionally, catalyzes the formation of acetyl phosphate from acetate and ATP. Can also catalyze the reverse reaction. The chain is Acetate kinase from Clavibacter michiganensis subsp. michiganensis (strain NCPPB 382).